A 475-amino-acid chain; its full sequence is MTVSQIPIAAIATAPGRGGIGVVRVSGPDVGAVMRAVCGRALQPRHATYLPFLDARGNVIDHGLALYFPAPNSYTGEEVLELQGHGGPVVMQMLLSRCLEAGKDIGLRVAEPGEFTRRAFLNDKLDLAQAEAVADLIEASTEAAARSAARSMEGEFSKAIHALVEKVIHLRMLVEATLDFPEEEIDFLEASNARGQLTRIREDLAGVLKQARQGSLLREGLSVVLAGQPNVGKSSLLNALAGSDLAIVTPIAGTTRDRVRETIQIDGIPLHIIDTAGLRDDAADEVERIGIERTWEAIRHADIVLHLIDAADYIEHGISETDDHIDDRLSGQLPPGSPIVRVINKIDLAPSVGAMGFGGNRPHVVAANGPNPTEIWISARTGAGIDLMRSELLRLIGWQSGNEGAFLARERHLIALRNAESHLELAEASASQHAQALDLFAEELRLAQDHLNSITGEFTSDDLLGTIFTRFCIGK.

(6S)-5-formyl-5,6,7,8-tetrahydrofolate contacts are provided by R24, E81, and K124. One can recognise a TrmE-type G domain in the interval 220–397 (GLSVVLAGQP…MRSELLRLIG (178 aa)). N230 lines the K(+) pocket. GTP is bound by residues 230-235 (NVGKSS), 249-255 (TPIAGTT), 274-277 (DTAG), and 378-380 (SAR). Mg(2+) is bound at residue S234. K(+) is bound by residues T249, I251, and T254. T255 contacts Mg(2+). K475 is a binding site for (6S)-5-formyl-5,6,7,8-tetrahydrofolate.

Belongs to the TRAFAC class TrmE-Era-EngA-EngB-Septin-like GTPase superfamily. TrmE GTPase family. As to quaternary structure, homodimer. Heterotetramer of two MnmE and two MnmG subunits. K(+) serves as cofactor.

The protein resides in the cytoplasm. Its function is as follows. Exhibits a very high intrinsic GTPase hydrolysis rate. Involved in the addition of a carboxymethylaminomethyl (cmnm) group at the wobble position (U34) of certain tRNAs, forming tRNA-cmnm(5)s(2)U34. In Cupriavidus metallidurans (strain ATCC 43123 / DSM 2839 / NBRC 102507 / CH34) (Ralstonia metallidurans), this protein is tRNA modification GTPase MnmE.